The following is a 251-amino-acid chain: Imidazole glycerol phosphate synthase subunit HisF (251 aa).

Catalysis depends on residues D12 and D131.

It belongs to the HisA/HisF family. In terms of assembly, heterodimer of HisH and HisF.

It localises to the cytoplasm. The catalysed reaction is 5-[(5-phospho-1-deoxy-D-ribulos-1-ylimino)methylamino]-1-(5-phospho-beta-D-ribosyl)imidazole-4-carboxamide + L-glutamine = D-erythro-1-(imidazol-4-yl)glycerol 3-phosphate + 5-amino-1-(5-phospho-beta-D-ribosyl)imidazole-4-carboxamide + L-glutamate + H(+). It participates in amino-acid biosynthesis; L-histidine biosynthesis; L-histidine from 5-phospho-alpha-D-ribose 1-diphosphate: step 5/9. Functionally, IGPS catalyzes the conversion of PRFAR and glutamine to IGP, AICAR and glutamate. The HisF subunit catalyzes the cyclization activity that produces IGP and AICAR from PRFAR using the ammonia provided by the HisH subunit. The polypeptide is Imidazole glycerol phosphate synthase subunit HisF (Streptomyces avermitilis (strain ATCC 31267 / DSM 46492 / JCM 5070 / NBRC 14893 / NCIMB 12804 / NRRL 8165 / MA-4680)).